A 493-amino-acid chain; its full sequence is MSFKDLRSFIEHLESNGELKRISHPVDPHLEMTEIADRVLRSKGPALLFENPVGNDMPVLANLFGTPKRVAMALGKEDPLALRDVGELLAFLKEPEPPRGFKDAISKIPMFKQALNMPPKTVRNPPCQEVVKTAEEVDLTKLPIQHCWPGDVAPLVTWGLTITKGPRQKRQNLGIYRQQLLGKDKLIMRWLDHRGGALDFKDFKEKHPGDRYPVVVALGSDPVTILGAVTPVPDSMSEYAFAGLLRGERTEVCKAISCDLEVPATSEIILEGYIDPEEMAEEGPYGDHTGYYNETDSFPVFTVTHITHRKDAIYHSTYTGRPPDEPAMLGVALNEVFVPILRKQYPEIIDFYLPPEGCSYRMAVISIRKQYPGHAKRVMMGAWSFLRQFMYTKFIVVVDEDVNCRDWNDVIWAITTRMDPKRDTVMIENTPIDYLDFASPVAGLGSKMGMDATNKWEGETDREWGTPIVMDEAVKQKVDEIWSDLGIDDAPTL.

Asn172 serves as a coordination point for Mn(2+). Prenylated FMN contacts are provided by residues Ile175–Arg177, Arg189–Leu191, and Arg194–Gly195. Glu238 is a binding site for Mn(2+). Asp287 acts as the Proton donor in catalysis.

The protein belongs to the UbiD family. In terms of assembly, homohexamer. The cofactor is prenylated FMN. Requires Mn(2+) as cofactor.

Its subcellular location is the cell membrane. The enzyme catalyses a 4-hydroxy-3-(all-trans-polyprenyl)benzoate + H(+) = a 2-(all-trans-polyprenyl)phenol + CO2. It functions in the pathway cofactor biosynthesis; ubiquinone biosynthesis. In terms of biological role, catalyzes the decarboxylation of 3-octaprenyl-4-hydroxy benzoate to 2-octaprenylphenol, an intermediate step in ubiquinone biosynthesis. The sequence is that of 3-octaprenyl-4-hydroxybenzoate carboxy-lyase from Shewanella piezotolerans (strain WP3 / JCM 13877).